The chain runs to 474 residues: Gamma-aminobutyric acid receptor subunit beta-1 (474 aa).

The signal sequence occupies residues 1 to 25 (MWTVQNRESLGLLSFPVMIAMVCCA). The Extracellular segment spans residues 26 to 245 (HSANEPSNMS…SFRLKRNIGY (220 aa)). N-linked (GlcNAc...) asparagine glycans are attached at residues Asn33 and Asn105. Residue Tyr122 coordinates histamine. An intrachain disulfide couples Cys161 to Cys175. The N-linked (GlcNAc...) asparagine glycan is linked to Asn174. Histamine contacts are provided by residues 181–182 (SY) and Thr227. Tyr182 and Thr227 together coordinate 4-aminobutanoate. 3 consecutive transmembrane segments (helical) span residues 246–267 (FILQ…SFWI), 271–293 (ASAA…STHL), and 305–327 (AIDI…YAFV). Over 328–451 (NYIFFGKGPQ…DLTDVNSIDK (124 aa)) the chain is Cytoplasmic. A helical transmembrane segment spans residues 452 to 473 (WSRMFFPITFSLFNVVYWLYYV).

This sequence belongs to the ligand-gated ion channel (TC 1.A.9) family. Gamma-aminobutyric acid receptor (TC 1.A.9.5) subfamily. GABRB1 sub-subfamily. As to quaternary structure, heteropentamer, formed by a combination of alpha (GABRA1-6), beta (GABRB1-3), gamma (GABRG1-3), delta (GABRD), epsilon (GABRE), rho (GABRR1-3), pi (GABRP) and theta (GABRQ) chains, each subunit exhibiting distinct physiological and pharmacological properties. Binds UBQLN1.

It is found in the postsynaptic cell membrane. The protein localises to the cell membrane. It carries out the reaction chloride(in) = chloride(out). Its activity is regulated as follows. Potentiated by histamine. In terms of biological role, beta subunit of the heteropentameric ligand-gated chloride channel gated by gamma-aminobutyric acid (GABA), a major inhibitory neurotransmitter in the brain. GABA-gated chloride channels, also named GABA(A) receptors (GABAAR), consist of five subunits arranged around a central pore and contain GABA active binding site(s) located at the alpha and beta subunit interface(s). When activated by GABA, GABAARs selectively allow the flow of chloride anions across the cell membrane down their electrochemical gradient. Chloride influx into the postsynaptic neuron following GABAAR opening decreases the neuron ability to generate a new action potential, thereby reducing nerve transmission. Beta-containing GABAARs can simultaneously bind GABA and histamine where histamine binds at the interface of two neighboring beta subunits, which may be involved in the regulation of sleep and wakefulness. In Bos taurus (Bovine), this protein is Gamma-aminobutyric acid receptor subunit beta-1 (GABRB1).